The sequence spans 250 residues: ATP synthase subunit a (250 aa).

Helical transmembrane passes span 26–46 (FTNA…FLYL), 84–104 (FFPM…LGMV), 114–134 (IIVT…YGFY), 143–163 (LFVP…IEII), 193–213 (FVAS…LPLI), and 216–236 (VALT…FAVL).

The protein belongs to the ATPase A chain family. F-type ATPases have 2 components, CF(1) - the catalytic core - and CF(0) - the membrane proton channel. CF(1) has five subunits: alpha(3), beta(3), gamma(1), delta(1), epsilon(1). CF(0) has three main subunits: a(1), b(2) and c(9-12). The alpha and beta chains form an alternating ring which encloses part of the gamma chain. CF(1) is attached to CF(0) by a central stalk formed by the gamma and epsilon chains, while a peripheral stalk is formed by the delta and b chains.

Its subcellular location is the cell inner membrane. Key component of the proton channel; it plays a direct role in the translocation of protons across the membrane. This is ATP synthase subunit a from Rhizobium meliloti (strain 1021) (Ensifer meliloti).